The chain runs to 334 residues: L-lactate dehydrogenase B-B chain (334 aa).

NAD(+) contacts are provided by residues 30 to 58 (GQVG…VEDK) and arginine 100. Arginine 107, asparagine 139, and arginine 170 together coordinate substrate. Position 139 (asparagine 139) interacts with NAD(+). Histidine 194 functions as the Proton acceptor in the catalytic mechanism. Threonine 249 provides a ligand contact to substrate.

The protein belongs to the LDH/MDH superfamily. LDH family. Homotetramer.

It localises to the cytoplasm. It catalyses the reaction (S)-lactate + NAD(+) = pyruvate + NADH + H(+). It participates in fermentation; pyruvate fermentation to lactate; (S)-lactate from pyruvate: step 1/1. The sequence is that of L-lactate dehydrogenase B-B chain from Danio rerio (Zebrafish).